Consider the following 528-residue polypeptide: 3-ketoacyl-CoA synthase 2 (528 aa).

Helical transmembrane passes span 36–56 (LGYH…VGLL) and 78–98 (FHFL…TLYF). In terms of domain architecture, FAE spans 97-388 (YFTTRPRRIF…FFATLVARKV (292 aa)). Residues C241, H320, H407, H411, and N444 contribute to the active site.

Belongs to the thiolase-like superfamily. Chalcone/stilbene synthases family. In terms of tissue distribution, expressed in siliques, flowers and stems. In young seedlings, expressed in the central cylinder of primary roots, in emerging lateral roots and in their root cap, but not in aboveground tissues such as hypocotyls, cotyledons and leaves. Expressed in sepals in mature flowers and in the chalaza and micropyle region of developing seeds shortly prior to or just after the detachment from the funiculus. Expressed in roots, flowers, cauline leaves and siliques.

The protein resides in the membrane. The catalysed reaction is a very-long-chain acyl-CoA + malonyl-CoA + H(+) = a very-long-chain 3-oxoacyl-CoA + CO2 + CoA. It functions in the pathway lipid metabolism; fatty acid biosynthesis. Its activity is regulated as follows. Inhibited by K3 herbicides such as allidochlor, anilofos, cafenstrole and flufenacet. Strongly inhibited by metazachlor. Its function is as follows. Mediates the synthesis of VLCFAs from 22 to 26 carbons in length (e.g. C22, C24, C26). Involved in the elongation of C20 fatty acid suberin precursors. Functionally redundant with KCS20 in the two-carbon elongation of C22 fatty acids that is required for cuticular wax and root suberin biosynthesis. The protein is 3-ketoacyl-CoA synthase 2 of Arabidopsis thaliana (Mouse-ear cress).